A 43-amino-acid polypeptide reads, in one-letter code: Protein PsbN 1 (43 aa).

Residues T3–L23 form a helical membrane-spanning segment.

This sequence belongs to the PsbN family.

It is found in the cellular thylakoid membrane. May play a role in photosystem I and II biogenesis. The polypeptide is Protein PsbN 1 (Microcystis aeruginosa (strain NIES-843 / IAM M-2473)).